Reading from the N-terminus, the 27-residue chain is Caerulein precursor fragment R5 (27 aa).

Expressed by the skin glands.

It localises to the secreted. Antimicrobial peptide. In Xenopus ruwenzoriensis (Uganda clawed frog), this protein is Caerulein precursor fragment R5.